A 124-amino-acid polypeptide reads, in one-letter code: Small ribosomal subunit protein uS12 (124 aa).

Asp89 carries the 3-methylthioaspartic acid modification. The interval 105 to 124 is disordered; sequence QGVKNRKQARSKYGAKMEKK.

It belongs to the universal ribosomal protein uS12 family. In terms of assembly, part of the 30S ribosomal subunit. Contacts proteins S8 and S17. May interact with IF1 in the 30S initiation complex.

Its function is as follows. With S4 and S5 plays an important role in translational accuracy. Interacts with and stabilizes bases of the 16S rRNA that are involved in tRNA selection in the A site and with the mRNA backbone. Located at the interface of the 30S and 50S subunits, it traverses the body of the 30S subunit contacting proteins on the other side and probably holding the rRNA structure together. The combined cluster of proteins S8, S12 and S17 appears to hold together the shoulder and platform of the 30S subunit. The sequence is that of Small ribosomal subunit protein uS12 from Renibacterium salmoninarum (strain ATCC 33209 / DSM 20767 / JCM 11484 / NBRC 15589 / NCIMB 2235).